The primary structure comprises 78 residues: Large ribosomal subunit protein bL28 (78 aa).

The tract at residues 1-20 (MSRVCQVTGKGPVTGNNISH) is disordered.

The protein belongs to the bacterial ribosomal protein bL28 family.

This Stutzerimonas stutzeri (strain A1501) (Pseudomonas stutzeri) protein is Large ribosomal subunit protein bL28.